The primary structure comprises 176 residues: Ribosome maturation factor RimM (176 aa).

Residues E101 to L170 form the PRC barrel domain.

The protein belongs to the RimM family. In terms of assembly, binds ribosomal protein uS19.

It is found in the cytoplasm. In terms of biological role, an accessory protein needed during the final step in the assembly of 30S ribosomal subunit, possibly for assembly of the head region. Essential for efficient processing of 16S rRNA. May be needed both before and after RbfA during the maturation of 16S rRNA. It has affinity for free ribosomal 30S subunits but not for 70S ribosomes. This Solibacter usitatus (strain Ellin6076) protein is Ribosome maturation factor RimM.